The chain runs to 187 residues: MMKYVFVALCLFAVVALATEVEQKESNTRVARLNVGGLVGCVVALVANIVGGLLRVIIGLVVTLSGVLQIVVGTVLGLVATVASLALDVVGSTVGGILNSLLGLGAILSLVEEVLHVLLSQALLTGLVNAIFALPLSLLVALSTLTDALASAACDCGASATGAGSSLAGCIAGPNGLLFTVGAGASV.

Positions 1–18 (MMKYVFVALCLFAVVALA) are cleaved as a signal peptide.

It to HAP-S protein.

It localises to the membrane. The sequence is that of Plasmodium-specific hydrophobic abundant protein from Physarum polycephalum (Slime mold).